The chain runs to 150 residues: U1 small nuclear ribonucleoprotein C (150 aa).

The segment at 4-36 (YYCDYCKSYLTHDTMSVRKSHLQGRNHIKFYCD) adopts a Matrin-type zinc-finger fold. The disordered stretch occupies residues 66 to 127 (SDAKKSNGSS…PPNLSGLPLP (62 aa)). A compositionally biased stretch (basic and acidic residues) spans 80–92 (DIDKKENSSDHNK). Residues 103–112 (NDNDDDDDEM) show a composition bias toward acidic residues.

Belongs to the U1 small nuclear ribonucleoprotein C family. U1 snRNP is composed of the 7 core Sm proteins B/B', D1, D2, D3, E, F and G that assemble in a heptameric protein ring on the Sm site of the small nuclear RNA to form the core snRNP, and at least 3 U1 snRNP-specific proteins U1-70K, U1-A and U1-C. U1-C interacts with U1 snRNA and the 5' splice-site region of the pre-mRNA.

The protein localises to the nucleus. Its function is as follows. Component of the spliceosomal U1 snRNP, which is essential for recognition of the pre-mRNA 5' splice-site and the subsequent assembly of the spliceosome. U1-C is directly involved in initial 5' splice-site recognition for both constitutive and regulated alternative splicing. The interaction with the 5' splice-site seems to precede base-pairing between the pre-mRNA and the U1 snRNA. Stimulates commitment or early (E) complex formation by stabilizing the base pairing of the 5' end of the U1 snRNA and the 5' splice-site region. In Candida albicans (strain WO-1) (Yeast), this protein is U1 small nuclear ribonucleoprotein C.